The following is a 100-amino-acid chain: Protein MEN-8 (100 aa).

An N-terminal signal peptide occupies residues 1–33 (MANNMKSATFCKATWAIFLVALAILVQLKGSEA). 4 disulfides stabilise this stretch: Cys38-Cys76, Cys48-Cys65, Cys66-Cys91, and Cys78-Cys98.

This sequence belongs to the A9/FIL1 family.

The protein resides in the secreted. This Silene latifolia (White campion) protein is Protein MEN-8 (MEN-8).